Reading from the N-terminus, the 384-residue chain is Glucose-fructose oxidoreductase domain-containing protein 2 (384 aa).

A signal peptide spans 1 to 25; it reads MKTLPGIGVFGTGNTARVLISLLRA. Residues 358–384 form a disordered region; the sequence is GEWESVELTNDETDSNQNLSEVIQHNL. The segment covering 372–384 has biased composition (polar residues); the sequence is SNQNLSEVIQHNL.

This sequence belongs to the Gfo/Idh/MocA family.

The protein resides in the secreted. It is found in the extracellular space. The protein localises to the extracellular matrix. In terms of biological role, promotes matrix assembly. In Xenopus tropicalis (Western clawed frog), this protein is Glucose-fructose oxidoreductase domain-containing protein 2 (gfod2).